The chain runs to 431 residues: Evolutionarily conserved signaling intermediate in Toll pathway, mitochondrial (431 aa).

A mitochondrion-targeting transit peptide spans 1-48 (MSWVQATLLARGLCRAWGGTCGAALTGTSISQVPRRLPRGLHCSAAAH). Residue lysine 372 forms a Glycyl lysine isopeptide (Lys-Gly) (interchain with G-Cter in ubiquitin) linkage. Residues 400-431 (LQTSSAGLEEPPLPEDHQEEDDNLQRQQQGQS) are disordered.

It belongs to the ECSIT family. Interacts with MAP3K1, SMAD4 and TRAF6. Interacts with SMAD1 only after BMP4-treatment. Part of the mitochondrial complex I assembly/MCIA complex that comprises at least the core subunits TMEM126B, NDUFAF1, ECSIT and ACAD9 and complement subunits such as COA1 and TMEM186. Interacts with NDUFAF1. Interacts with ACAD9. Interacts with TRIM59. Interacts with TMEM70 and TMEM242. Interacts (when ubiquitinated) with NF-kappa-B subunits RELA and NFKB1. Interacts with RIGI, IFIT1 and MAVS; these interactions promote RLR-mediated type I IFN induction. Interacts with SQSTM1; this interaction inhibits TLR4 signaling via functional regulation of the TRAF6-ECSIT complex. Interacts with cereblon/CRBN; this interaction inhibits the ubiquitination of ECSIT. Ubiquitinated on Lys-372; leading to translocation in the nucleus together with RELA and NFKB1 and expression of NF-kappa-B-dependent genes.

Its subcellular location is the cytoplasm. It is found in the nucleus. The protein resides in the mitochondrion. In terms of biological role, adapter protein that plays a role in different signaling pathways including TLRs and IL-1 pathways or innate antiviral induction signaling. Plays a role in the activation of NF-kappa-B by forming a signal complex with TRAF6 and TAK1/MAP3K7 to activate TAK1/MAP3K7 leading to activation of IKKs. Once ubiquitinated, interacts with the dissociated RELA and NFKB1 proteins and translocates to the nucleus where it induces NF-kappa-B-dependent gene expression. Plays a role in innate antiviral immune response by bridging the pattern recognition receptors RIGI and MDA5/IFIT1 to the MAVS complex at the mitochondrion. Promotes proteolytic activation of MAP3K1. Involved in the BMP signaling pathway. Required for normal embryonic development. As part of the MCIA complex, involved in the assembly of the mitochondrial complex I. The chain is Evolutionarily conserved signaling intermediate in Toll pathway, mitochondrial from Homo sapiens (Human).